Consider the following 388-residue polypeptide: Succinate--CoA ligase [ADP-forming] subunit beta (388 aa).

Positions 9–244 (KQLFARYGLP…QSQEDPRAAQ (236 aa)) constitute an ATP-grasp domain. Residues K46, 53–55 (GRG), E99, T102, and E107 each bind ATP. Mg(2+) is bound by residues N199 and D213. Residues N264 and 321–323 (GIV) contribute to the substrate site.

Belongs to the succinate/malate CoA ligase beta subunit family. As to quaternary structure, heterotetramer of two alpha and two beta subunits. Requires Mg(2+) as cofactor.

It catalyses the reaction succinate + ATP + CoA = succinyl-CoA + ADP + phosphate. It carries out the reaction GTP + succinate + CoA = succinyl-CoA + GDP + phosphate. It participates in carbohydrate metabolism; tricarboxylic acid cycle; succinate from succinyl-CoA (ligase route): step 1/1. Its function is as follows. Succinyl-CoA synthetase functions in the citric acid cycle (TCA), coupling the hydrolysis of succinyl-CoA to the synthesis of either ATP or GTP and thus represents the only step of substrate-level phosphorylation in the TCA. The beta subunit provides nucleotide specificity of the enzyme and binds the substrate succinate, while the binding sites for coenzyme A and phosphate are found in the alpha subunit. This is Succinate--CoA ligase [ADP-forming] subunit beta from Shigella flexneri serotype 5b (strain 8401).